The primary structure comprises 503 residues: Maturase K (503 aa).

It belongs to the intron maturase 2 family. MatK subfamily.

Its subcellular location is the plastid. The protein resides in the chloroplast. Its function is as follows. Usually encoded in the trnK tRNA gene intron. Probably assists in splicing its own and other chloroplast group II introns. The protein is Maturase K of Syzygium anisatum (Aniseed myrtle).